Consider the following 89-residue polypeptide: YcgL domain-containing protein Asuc_1390 (89 aa).

The YcgL domain maps to 1-85; sequence MLCAIYKSKK…KDDWLFTIEK (85 aa).

In Actinobacillus succinogenes (strain ATCC 55618 / DSM 22257 / CCUG 43843 / 130Z), this protein is YcgL domain-containing protein Asuc_1390.